The following is a 297-amino-acid chain: MKRPDYRTLQALDAVIRERGFERAAQKLCITQSAVSQRIKQLENMFGQPLLVRTVPPRPTEQGQKLLALLRQVELLEEEWLGDEQTGSTPLLLSLAVNADSLATWLLPALAPVLADSPIRLNLQVEDETRTQERLRRGEVVGAVSIQHQALPSCLVDKLGALDYLFVASKPFAERYFPNGVTRSSLLKAPAVAFDHLDDMHQAFLQQNFDLPPGSVPCHIVNSSEAFVQLARQGTTCCMIPHLQIEQELESGELINLTPGLLQRRMLYWHRFAPESRMMRKVTDALLEYGHKVLRQD.

The region spanning 4-60 (PDYRTLQALDAVIRERGFERAAQKLCITQSAVSQRIKQLENMFGQPLLVRTVPPRPT) is the HTH lysR-type domain. Positions 21–40 (FERAAQKLCITQSAVSQRIK) form a DNA-binding region, H-T-H motif.

It belongs to the LysR transcriptional regulatory family. In terms of assembly, homodimer.

Its function is as follows. Controls the transcription of genes involved in arginine and lysine metabolism. This Salmonella arizonae (strain ATCC BAA-731 / CDC346-86 / RSK2980) protein is HTH-type transcriptional regulator ArgP.